A 357-amino-acid polypeptide reads, in one-letter code: Neutral protease 2 homolog UREG_02006 (357 aa).

The N-terminal stretch at 1 to 19 (MLFSSRFLALAALLGQALA) is a signal peptide. The propeptide occupies 20–179 (LPIDDFSQSD…QSAVPTIEKR (160 aa)). Cystine bridges form between Cys-187–Cys-259 and Cys-266–Cys-284. His-308 lines the Zn(2+) pocket. Glu-309 is a catalytic residue. Residues His-312 and Asp-323 each coordinate Zn(2+).

It belongs to the peptidase M35 family. It depends on Zn(2+) as a cofactor.

The protein resides in the secreted. The enzyme catalyses Preferential cleavage of bonds with hydrophobic residues in P1'. Also 3-Asn-|-Gln-4 and 8-Gly-|-Ser-9 bonds in insulin B chain.. Secreted metalloproteinase that allows assimilation of proteinaceous substrates. Shows high activities on basic nuclear substrates such as histone and protamine. The sequence is that of Neutral protease 2 homolog UREG_02006 from Uncinocarpus reesii (strain UAMH 1704).